Here is a 338-residue protein sequence, read N- to C-terminus: Lipoyl synthase (338 aa).

Residues 1-24 (MTTVQEAVPNLIPTQDATPRPAPK) are disordered. [4Fe-4S] cluster is bound by residues Cys84, Cys89, Cys95, Cys110, Cys114, Cys117, and Ser324. The 218-residue stretch at 96–313 (FSGGTATFMI…AEEGYKMGFK (218 aa)) folds into the Radical SAM core domain.

Belongs to the radical SAM superfamily. Lipoyl synthase family. It depends on [4Fe-4S] cluster as a cofactor.

It is found in the cytoplasm. The catalysed reaction is [[Fe-S] cluster scaffold protein carrying a second [4Fe-4S](2+) cluster] + N(6)-octanoyl-L-lysyl-[protein] + 2 oxidized [2Fe-2S]-[ferredoxin] + 2 S-adenosyl-L-methionine + 4 H(+) = [[Fe-S] cluster scaffold protein] + N(6)-[(R)-dihydrolipoyl]-L-lysyl-[protein] + 4 Fe(3+) + 2 hydrogen sulfide + 2 5'-deoxyadenosine + 2 L-methionine + 2 reduced [2Fe-2S]-[ferredoxin]. The protein operates within protein modification; protein lipoylation via endogenous pathway; protein N(6)-(lipoyl)lysine from octanoyl-[acyl-carrier-protein]: step 2/2. In terms of biological role, catalyzes the radical-mediated insertion of two sulfur atoms into the C-6 and C-8 positions of the octanoyl moiety bound to the lipoyl domains of lipoate-dependent enzymes, thereby converting the octanoylated domains into lipoylated derivatives. This Pseudomonas putida (strain ATCC 700007 / DSM 6899 / JCM 31910 / BCRC 17059 / LMG 24140 / F1) protein is Lipoyl synthase.